We begin with the raw amino-acid sequence, 331 residues long: Putative ankyrin repeat protein RBE_0261 (331 aa).

The stretch at 94 to 159 is one ANK repeat; it reads QGENVIHKCV…KAKNTLLNIV (66 aa).

This Rickettsia bellii (strain RML369-C) protein is Putative ankyrin repeat protein RBE_0261.